The chain runs to 92 residues: Small ribosomal subunit protein uS19 (92 aa).

This sequence belongs to the universal ribosomal protein uS19 family.

Functionally, protein S19 forms a complex with S13 that binds strongly to the 16S ribosomal RNA. The chain is Small ribosomal subunit protein uS19 from Beijerinckia indica subsp. indica (strain ATCC 9039 / DSM 1715 / NCIMB 8712).